The primary structure comprises 884 residues: Coatomer subunit gamma-1 (884 aa).

5 HEAT repeats span residues 65 to 100, 101 to 138, 286 to 323, 325 to 357, and 358 to 395; these read VEAT…SPSS, DEVI…GTLL, RELA…TRPL, VTNC…TGNE, and SSVD…KFPL. The disordered stretch occupies residues 592-612; it reads QPLQEKKAPGKKPPAGAPAPA. The segment covering 602-612 has biased composition (pro residues); that stretch reads KKPPAGAPAPA.

It belongs to the COPG family. In terms of assembly, oligomeric complex that consists of at least the alpha, beta, beta', gamma, delta, epsilon and zeta subunits.

It is found in the cytoplasm. The protein resides in the golgi apparatus membrane. Its subcellular location is the cytoplasmic vesicle. It localises to the COPI-coated vesicle membrane. Functionally, the coatomer is a cytosolic protein complex that binds to dilysine motifs and reversibly associates with Golgi non-clathrin-coated vesicles, which further mediate biosynthetic protein transport from the ER, via the Golgi up to the trans Golgi network. Coatomer complex is required for budding from Golgi membranes, and is essential for the retrograde Golgi-to-ER transport of dilysine-tagged proteins. This Oryza sativa subsp. japonica (Rice) protein is Coatomer subunit gamma-1.